The sequence spans 552 residues: MSWTGIALFIQLFFGIIIGLYFWNLLKNQRTQKVTIDKESKKEMEQLRKMRAISLSEPLSEKVRPKSFKDIVGQEDGIKALKAALCGPNPQHVIVYGPPGVGKTAAARLVLEEAKKHKQSPFKEQAVFVELDATTARFDERGIADPLIGSVHDPIYQGAGAMGQAGIPQPKQGAVTHAHGGVLFIDEIGELHPIQMNKMLKVLEDRKVFLDSAYYSEENTQIPNHIHDIFQNGLPADFRLIGATTRMPNEIPPAIRSRCLEVFFRELEKDELKTVAKTAADKIEKNISEEGLDLLTSYTRNGREAVNMIQIAAGMAVTENRKDITIEDIEWVIHSSQLTPKHEQKIGVEPQVGIVNGLAVYGPNSGSLLEIEVSVTAAQDKGSINITGIAEEESIGSQSKSIRRKSMAKGSVENVLTVLRTMGMKPSDYDIHINFPGGIPIDGPSAGIAMAAGIFSAIHKIPIDNTVAMTGEISLNGLVKPIGGVIPKIKAAKQSGAKKVIIPYENQQAILKQIDGIEIIAVKTFQEVLDEILVNPPTEQKPFHIEINKESV.

Position 97 to 104 (97 to 104 (GPPGVGKT)) interacts with ATP. The Lon proteolytic domain maps to 349–535 (EPQVGIVNGL…QEVLDEILVN (187 aa)). Catalysis depends on residues Ser-445 and Lys-488.

The protein belongs to the peptidase S16 family. As to quaternary structure, homohexamer. Organized in a ring with a central cavity.

It localises to the cytoplasm. It carries out the reaction Hydrolysis of proteins in presence of ATP.. Its function is as follows. ATP-dependent serine protease that mediates the selective degradation of mutant and abnormal proteins as well as certain short-lived regulatory proteins. Required for cellular homeostasis and for survival from DNA damage and developmental changes induced by stress. Degrades polypeptides processively to yield small peptide fragments that are 5 to 10 amino acids long. Binds to DNA in a double-stranded, site-specific manner. The polypeptide is Lon protease 2 (lon2) (Bacillus subtilis (strain 168)).